The primary structure comprises 507 residues: ATP synthase subunit alpha, chloroplastic (507 aa).

170–177 provides a ligand contact to ATP; it reads GDRQTGKA.

The protein belongs to the ATPase alpha/beta chains family. As to quaternary structure, F-type ATPases have 2 components, CF(1) - the catalytic core - and CF(0) - the membrane proton channel. CF(1) has five subunits: alpha(3), beta(3), gamma(1), delta(1), epsilon(1). CF(0) has four main subunits: a, b, b' and c.

The protein localises to the plastid. Its subcellular location is the chloroplast thylakoid membrane. The enzyme catalyses ATP + H2O + 4 H(+)(in) = ADP + phosphate + 5 H(+)(out). In terms of biological role, produces ATP from ADP in the presence of a proton gradient across the membrane. The alpha chain is a regulatory subunit. The protein is ATP synthase subunit alpha, chloroplastic of Calycanthus floridus var. glaucus (Eastern sweetshrub).